The chain runs to 63 residues: MKQLEIKNLSAAELQAKLVQLKKTYSDIKIAHAISPIENPLQIRSLRRSVARIATEISKRELL.

This sequence belongs to the universal ribosomal protein uL29 family.

The polypeptide is Large ribosomal subunit protein uL29 (Flavobacterium psychrophilum (strain ATCC 49511 / DSM 21280 / CIP 103535 / JIP02/86)).